The primary structure comprises 433 residues: 23S rRNA (uracil(1939)-C(5))-methyltransferase RlmD (433 aa).

Positions 10–68 (RTTTRQIITVSVNDLDSFGQGVARHNGKTLFIPGLLPQENAEVAVTEDKKQYARAKVVR) constitute a TRAM domain. Residues cysteine 81, cysteine 87, cysteine 90, and cysteine 162 each contribute to the [4Fe-4S] cluster site. 6 residues coordinate S-adenosyl-L-methionine: glutamine 265, phenylalanine 294, asparagine 299, glutamate 315, asparagine 342, and aspartate 363. Catalysis depends on cysteine 389, which acts as the Nucleophile.

This sequence belongs to the class I-like SAM-binding methyltransferase superfamily. RNA M5U methyltransferase family. RlmD subfamily.

The enzyme catalyses uridine(1939) in 23S rRNA + S-adenosyl-L-methionine = 5-methyluridine(1939) in 23S rRNA + S-adenosyl-L-homocysteine + H(+). In terms of biological role, catalyzes the formation of 5-methyl-uridine at position 1939 (m5U1939) in 23S rRNA. The polypeptide is 23S rRNA (uracil(1939)-C(5))-methyltransferase RlmD (Shigella flexneri).